Consider the following 647-residue polypeptide: LIM domain kinase 1 (647 aa).

LIM zinc-binding domains lie at 25 to 75 (CASC…CKKD) and 84 to 137 (CHGC…CGQC). The PDZ domain occupies 165–258 (LVSIPASAHG…LLQLTLEHDP (94 aa)). Residue serine 210 is modified to Phosphoserine. The residue at position 229 (threonine 229) is a Phosphothreonine. The interval 256–319 (HDPHDSLGHG…SPASQRKDLG (64 aa)) is disordered. Residues 266–277 (PVSDPSPLSSPV) are compositionally biased toward low complexity. 2 stretches are compositionally biased toward polar residues: residues 278 to 289 (HTPSGQAASSAR) and 298 to 313 (SIDT…SPAS). Phosphoserine occurs at positions 298, 302, 307, and 310. Phosphoserine; by MAPKAPK2 is present on serine 323. The residue at position 337 (serine 337) is a Phosphoserine. Positions 339 to 604 (LIHGEVLGKG…PSFVKLEQWL (266 aa)) constitute a Protein kinase domain. ATP-binding positions include 345–353 (LGKGCFGQA) and lysine 368. Aspartate 460 is a catalytic residue. The residue at position 508 (threonine 508) is a Phosphothreonine; by ROCK1.

It belongs to the protein kinase superfamily. TKL Ser/Thr protein kinase family. Self-associates to form homodimers. Interacts with HSP90AA1; this interaction promotes LIMK1 dimerization and subsequent transphosphorylation. Interacts with CDKN1C. Interacts (via LIM domain) with the cytoplasmic domain of NRG1. Interacts with NISCH. Interacts with SSH1. Interacts with RLIM and RNF6. Interacts (via LIM zinc-binding domains) with FAM89B/LRAP25 (via LRR repeat). Forms a tripartite complex with CDC42BPA, CDC42BPB and FAM89B/LRAP25. In terms of processing, autophosphorylated. Phosphorylated on Thr-508 by ROCK1 and PAK1, resulting in activation. Phosphorylated by PAK4 which increases the ability of LIMK1 to phosphorylate cofilin. Phosphorylated at Ser-323 by MAPKAPK2 during activation of VEGFA-induced signaling, which results in activation of LIMK1 and promotion of actin reorganization, cell migration, and tubule formation of endothelial cells. Dephosphorylated and inactivated by SSH1. Phosphorylated by CDC42BP. Post-translationally, ubiquitinated. 'Lys-48'-linked polyubiquitination by RNF6 leads to proteasomal degradation through the 26S proteasome, modulating LIMK1 levels in the growth cone and its effect on axonal outgrowth. Also polyubiquitinated by RLIM. As to expression, highest expression in the nervous system, particularly in the spinal cord and the cranial nerve and dorsal root ganglia.

The protein resides in the cytoplasm. Its subcellular location is the nucleus. The protein localises to the cytoskeleton. It is found in the cell projection. It localises to the lamellipodium. It carries out the reaction L-seryl-[protein] + ATP = O-phospho-L-seryl-[protein] + ADP + H(+). The enzyme catalyses L-threonyl-[protein] + ATP = O-phospho-L-threonyl-[protein] + ADP + H(+). In terms of biological role, serine/threonine-protein kinase that plays an essential role in the regulation of actin filament dynamics. Acts downstream of several Rho family GTPase signal transduction pathways. Activated by upstream kinases including ROCK1, PAK1 and PAK4, which phosphorylate LIMK1 on a threonine residue located in its activation loop. LIMK1 subsequently phosphorylates and inactivates the actin binding/depolymerizing factors cofilin-1/CFL1, cofilin-2/CFL2 and destrin/DSTN, thereby preventing the cleavage of filamentous actin (F-actin), and stabilizing the actin cytoskeleton. In this way LIMK1 regulates several actin-dependent biological processes including cell motility, cell cycle progression, and differentiation. Phosphorylates TPPP on serine residues, thereby promoting microtubule disassembly. Stimulates axonal outgrowth and may be involved in brain development. The chain is LIM domain kinase 1 (Limk1) from Mus musculus (Mouse).